The following is a 532-amino-acid chain: Glucose-6-phosphate isomerase (532 aa).

The active-site Proton donor is the E322. Residues H351 and K457 contribute to the active site.

It belongs to the GPI family.

The protein localises to the cytoplasm. It catalyses the reaction alpha-D-glucose 6-phosphate = beta-D-fructose 6-phosphate. It functions in the pathway carbohydrate biosynthesis; gluconeogenesis. It participates in carbohydrate degradation; glycolysis; D-glyceraldehyde 3-phosphate and glycerone phosphate from D-glucose: step 2/4. Functionally, catalyzes the reversible isomerization of glucose-6-phosphate to fructose-6-phosphate. This is Glucose-6-phosphate isomerase from Synechococcus sp. (strain JA-2-3B'a(2-13)) (Cyanobacteria bacterium Yellowstone B-Prime).